An 81-amino-acid chain; its full sequence is Sulfur carrier protein TusA (81 aa).

Catalysis depends on Cys-19, which acts as the Cysteine persulfide intermediate.

This sequence belongs to the sulfur carrier protein TusA family. In terms of assembly, interacts with IscS.

The protein localises to the cytoplasm. It participates in tRNA modification. Sulfur carrier protein involved in sulfur trafficking in the cell. Part of a sulfur-relay system required for 2-thiolation during synthesis of 2-thiouridine of the modified wobble base 5-methylaminomethyl-2-thiouridine (mnm(5)s(2)U) in tRNA. Interacts with IscS and stimulates its cysteine desulfurase activity. Accepts an activated sulfur from IscS, which is then transferred to TusD, and thus determines the direction of sulfur flow from IscS to 2-thiouridine formation. Also appears to be involved in sulfur transfer for the biosynthesis of molybdopterin. In Pectobacterium atrosepticum (strain SCRI 1043 / ATCC BAA-672) (Erwinia carotovora subsp. atroseptica), this protein is Sulfur carrier protein TusA.